An 82-amino-acid chain; its full sequence is Immediate early response 3-interacting protein 1 (82 aa).

Transmembrane regions (helical) follow at residues 2-22 (AFTL…IAVL) and 62-82 (VMRV…LLFG).

Belongs to the YOS1 family.

The protein localises to the endoplasmic reticulum membrane. Functionally, regulator of endoplasmic reticulum secretion that acts as a key determinant of brain size. Required for secretion of extracellular matrix proteins. Required for correct brain development by depositing sufficient extracellular matrix proteins for tissue integrity and the proliferation of neural progenitors. Acts as a regulator of the unfolded protein response (UPR). The protein is Immediate early response 3-interacting protein 1 of Rattus norvegicus (Rat).